Here is a 484-residue protein sequence, read N- to C-terminus: Probable cytosol aminopeptidase (484 aa).

Mn(2+) contacts are provided by Lys256 and Asp261. Residue Lys268 is part of the active site. 3 residues coordinate Mn(2+): Asp279, Asp338, and Glu340. Arg342 is a catalytic residue.

This sequence belongs to the peptidase M17 family. Mn(2+) serves as cofactor.

The protein resides in the cytoplasm. It catalyses the reaction Release of an N-terminal amino acid, Xaa-|-Yaa-, in which Xaa is preferably Leu, but may be other amino acids including Pro although not Arg or Lys, and Yaa may be Pro. Amino acid amides and methyl esters are also readily hydrolyzed, but rates on arylamides are exceedingly low.. The catalysed reaction is Release of an N-terminal amino acid, preferentially leucine, but not glutamic or aspartic acids.. Functionally, presumably involved in the processing and regular turnover of intracellular proteins. Catalyzes the removal of unsubstituted N-terminal amino acids from various peptides. This Actinobacillus succinogenes (strain ATCC 55618 / DSM 22257 / CCUG 43843 / 130Z) protein is Probable cytosol aminopeptidase.